We begin with the raw amino-acid sequence, 199 residues long: Peroxiredoxin-1 (199 aa).

N-acetylserine is present on Ser-2. The region spanning 6–165 (AKIGHRAPQF…TLRLVQAFQF (160 aa)) is the Thioredoxin domain. Lys-7 is modified (N6-acetyllysine; alternate). Lys-7 is covalently cross-linked (Glycyl lysine isopeptide (Lys-Gly) (interchain with G-Cter in SUMO2); alternate). Lys-16 and Lys-27 each carry N6-acetyllysine. Position 35 is an N6-acetyllysine; alternate (Lys-35). An N6-succinyllysine; alternate modification is found at Lys-35. The active-site Cysteine sulfenic acid (-SOH) intermediate is the Cys-52. Position 90 is a phosphothreonine (Thr-90). Residue Lys-120 forms a Glycyl lysine isopeptide (Lys-Gly) (interchain with G-Cter in SUMO2) linkage. At Lys-136 the chain carries N6-acetyllysine. Residues 176 to 199 (GWKPGSDTIKPDVQKSKEYFSKQK) form a disordered region. A compositionally biased stretch (basic and acidic residues) spans 184-199 (IKPDVQKSKEYFSKQK). A Glycyl lysine isopeptide (Lys-Gly) (interchain with G-Cter in SUMO1) cross-link involves residue Lys-185. Position 197 is an N6-acetyllysine (Lys-197).

This sequence belongs to the peroxiredoxin family. AhpC/Prx1 subfamily. As to quaternary structure, homodimer; disulfide-linked, upon oxidation. 5 homodimers assemble to form a ring-like decamer. Interacts with GDPD5; forms a mixed-disulfide with GDPD5. Interacts with SESN1 and SESN2. Interacts with FAM107A. Phosphorylated on Thr-90 during the M-phase, which leads to a decrease in enzymatic activity. In terms of processing, acetylation increases reducing activity and resistance to superoxidation. Deacetylated by HDAC6 which decreases reducing activity.

The protein localises to the cytoplasm. It catalyses the reaction a hydroperoxide + [thioredoxin]-dithiol = an alcohol + [thioredoxin]-disulfide + H2O. Functionally, thiol-specific peroxidase that catalyzes the reduction of hydrogen peroxide and organic hydroperoxides to water and alcohols, respectively. Plays a role in cell protection against oxidative stress by detoxifying peroxides and as sensor of hydrogen peroxide-mediated signaling events. Might participate in the signaling cascades of growth factors and tumor necrosis factor-alpha by regulating the intracellular concentrations of H(2)O(2). Reduces an intramolecular disulfide bond in GDPD5 that gates the ability to GDPD5 to drive postmitotic motor neuron differentiation. The protein is Peroxiredoxin-1 (PRDX1) of Bos taurus (Bovine).